Consider the following 93-residue polypeptide: Large ribosomal subunit protein uL23cz/uL23cy (93 aa).

It belongs to the universal ribosomal protein uL23 family. Part of the 50S ribosomal subunit.

It localises to the plastid. It is found in the chloroplast. Binds to 23S rRNA. This is Large ribosomal subunit protein uL23cz/uL23cy (rpl23-A) from Helianthus annuus (Common sunflower).